The following is a 375-amino-acid chain: UPF0612 protein C569.003 (375 aa).

This sequence belongs to the UPF0612 family.

Its subcellular location is the cytoplasm. The sequence is that of UPF0612 protein C569.003 from Schizosaccharomyces pombe (strain 972 / ATCC 24843) (Fission yeast).